The sequence spans 696 residues: UvrABC system protein B (696 aa).

Residues 45 to 434 (EGIGDGLSYQ…DEVVEQVVRP (390 aa)) enclose the Helicase ATP-binding domain. 58-65 (GVTGSGKT) provides a ligand contact to ATP. A Beta-hairpin motif is present at residues 111–134 (YYDYYQPEAYVPQRDLFIEKDSSV). In terms of domain architecture, Helicase C-terminal spans 450–616 (QVDDLLSEIH…GVVKRIKDII (167 aa)). The 36-residue stretch at 647–682 (GKEIKRLEKQMLDHAKNLEFEKAAAVRDQLAKLKSQ) folds into the UVR domain.

It belongs to the UvrB family. As to quaternary structure, forms a heterotetramer with UvrA during the search for lesions. Interacts with UvrC in an incision complex.

Its subcellular location is the cytoplasm. Functionally, the UvrABC repair system catalyzes the recognition and processing of DNA lesions. A damage recognition complex composed of 2 UvrA and 2 UvrB subunits scans DNA for abnormalities. Upon binding of the UvrA(2)B(2) complex to a putative damaged site, the DNA wraps around one UvrB monomer. DNA wrap is dependent on ATP binding by UvrB and probably causes local melting of the DNA helix, facilitating insertion of UvrB beta-hairpin between the DNA strands. Then UvrB probes one DNA strand for the presence of a lesion. If a lesion is found the UvrA subunits dissociate and the UvrB-DNA preincision complex is formed. This complex is subsequently bound by UvrC and the second UvrB is released. If no lesion is found, the DNA wraps around the other UvrB subunit that will check the other stand for damage. The chain is UvrABC system protein B from Ralstonia nicotianae (strain ATCC BAA-1114 / GMI1000) (Ralstonia solanacearum).